The following is a 314-amino-acid chain: Nodulation protein D 1 (314 aa).

The 58-residue stretch at 6 to 63 (LDLNLLVVLDALLTERTLTAAASSINLSQPAMSAAVARLRDYFNDELFTTSGRERVLT) folds into the HTH lysR-type domain. A DNA-binding region (H-T-H motif) is located at residues 23-42 (LTAAASSINLSQPAMSAAVA).

It belongs to the LysR transcriptional regulatory family.

In terms of biological role, nodD regulates the expression of the nodABCFE genes which encode other nodulation proteins. NodD is also a negative regulator of its own expression. Binds flavenoids as inducers. This Mesorhizobium japonicum (strain LMG 29417 / CECT 9101 / MAFF 303099) (Mesorhizobium loti (strain MAFF 303099)) protein is Nodulation protein D 1 (nodD1).